A 202-amino-acid polypeptide reads, in one-letter code: Na(+)-translocating NADH-quinone reductase subunit E (202 aa).

A run of 6 helical transmembrane segments spans residues 11 to 31 (AVFVENMALAFFLGMCTFIAI), 35 to 55 (VETAIGLGIAVIVVQTITVPA), 81 to 101 (FLGLLSYIGVIAAIVQILEML), 114 to 134 (GVFLPLITVNCAIMAGSLFMV), 144 to 164 (TVYGVGSGFSWALAIAALAGI), and 180 to 200 (LGITFITIGLMSLGFMSFSGV).

This sequence belongs to the NqrDE/RnfAE family. Composed of six subunits; NqrA, NqrB, NqrC, NqrD, NqrE and NqrF.

The protein localises to the cell inner membrane. It carries out the reaction a ubiquinone + n Na(+)(in) + NADH + H(+) = a ubiquinol + n Na(+)(out) + NAD(+). Functionally, NQR complex catalyzes the reduction of ubiquinone-1 to ubiquinol by two successive reactions, coupled with the transport of Na(+) ions from the cytoplasm to the periplasm. NqrA to NqrE are probably involved in the second step, the conversion of ubisemiquinone to ubiquinol. The polypeptide is Na(+)-translocating NADH-quinone reductase subunit E (Pseudomonas aeruginosa (strain LESB58)).